Consider the following 518-residue polypeptide: Membrane-bound lytic murein transglycosylase F (518 aa).

Residues 1–21 form the signal peptide; sequence MKKLKINYLFIGILALLLAVA. Positions 22-269 are non-LT domain; it reads LWPSIPWFGK…RIEEKYLGHG (248 aa). Residues 270–518 are LT domain; the sequence is DDFDYVDTRT…SRKGSEEKQN (249 aa). The active site involves E314.

In the N-terminal section; belongs to the bacterial solute-binding protein 3 family. It in the C-terminal section; belongs to the transglycosylase Slt family.

It localises to the cell outer membrane. The catalysed reaction is Exolytic cleavage of the (1-&gt;4)-beta-glycosidic linkage between N-acetylmuramic acid (MurNAc) and N-acetylglucosamine (GlcNAc) residues in peptidoglycan, from either the reducing or the non-reducing ends of the peptidoglycan chains, with concomitant formation of a 1,6-anhydrobond in the MurNAc residue.. Functionally, murein-degrading enzyme that degrades murein glycan strands and insoluble, high-molecular weight murein sacculi, with the concomitant formation of a 1,6-anhydromuramoyl product. Lytic transglycosylases (LTs) play an integral role in the metabolism of the peptidoglycan (PG) sacculus. Their lytic action creates space within the PG sacculus to allow for its expansion as well as for the insertion of various structures such as secretion systems and flagella. The chain is Membrane-bound lytic murein transglycosylase F from Escherichia coli O157:H7.